A 220-amino-acid chain; its full sequence is Large ribosomal subunit protein uL3 (220 aa).

The segment at 130–156 (AIKRHGQSRGPMSHGSHFHRAPGSVGM) is disordered.

The protein belongs to the universal ribosomal protein uL3 family. In terms of assembly, part of the 50S ribosomal subunit. Forms a cluster with proteins L14 and L19.

In terms of biological role, one of the primary rRNA binding proteins, it binds directly near the 3'-end of the 23S rRNA, where it nucleates assembly of the 50S subunit. The protein is Large ribosomal subunit protein uL3 of Staphylococcus aureus (strain Mu3 / ATCC 700698).